The chain runs to 457 residues: Embryogenesis-associated protein EMB8 (457 aa).

The disordered stretch occupies residues Lys39 to Arg59. The AB hydrolase-1 domain occupies Pro151–Leu391. Catalysis depends on charge relay system residues Ser231, Asp361, and His390. Residues Val438–Asn447 are compositionally biased toward basic and acidic residues. Positions Val438 to Asn457 are disordered. Residues Asn448 to Asn457 show a composition bias toward polar residues.

Belongs to the AB hydrolase superfamily. AB hydrolase 4 family.

This Picea glauca (White spruce) protein is Embryogenesis-associated protein EMB8 (EMB8).